The following is a 439-amino-acid chain: MADPDVLTEVPAALKRLAKYVIRGFYGIEHALALDILIRNPCVKEEDMLELLKFDRKQLRSVLNNLKGDKFIKCRMRVETAADGKTTRHNYYFINYRTLVNVVKYKLDHMRRRIETDERDSTNRASFKCPVCSSTFTDLEANQLFDPMTGTFRCTFCHTEVEEDESAMPKKDARTLLARFNEQIEPIYALLRETEDVNLAYEILEPEPTEIPALKQSKDHAATTAGAASLAGGHHREAWATKGPSYEDLYTQNVVINMDDHEDLHRASLEGKSAKERPIWLRESTVQGAYSSEDMKEGGIDMDAFQEHEEGRAGPDDNEEVMRALLIHEKKTSSAMAGSVGAAAPVTTANGSDSESETSESDDDSPPRPAAVAVHKREEDEEEDDEFEEVADDPIVMVAGRPFSYSEVSQRPELVAQMTPEEKEAYIAMGQRMFEDLFE.

Residue Ala2 is modified to N-acetylalanine. The HTH TFE/IIEalpha-type domain maps to 14–104; that stretch reads LKRLAKYVIR…NYRTLVNVVK (91 aa). An N6-acetyllysine modification is found at Lys67. Positions 129, 132, 154, and 157 each coordinate Zn(2+). The C4-type zinc-finger motif lies at 129–157; the sequence is CPVCSSTFTDLEANQLFDPMTGTFRCTFC. Phosphoserine is present on Ser268. Residues 333-344 are compositionally biased toward low complexity; sequence SSAMAGSVGAAA. Residues 333-392 form a disordered region; the sequence is SSAMAGSVGAAAPVTTANGSDSESETSESDDDSPPRPAAVAVHKREEDEEEDDEFEEVAD. 2 stretches are compositionally biased toward acidic residues: residues 354–364 and 379–392; these read SESETSESDDD and EDEE…EVAD.

This sequence belongs to the TFIIE alpha subunit family. Tetramer of two alpha and two beta chains. Interacts with TAF6/TAFII80. Interacts with ATF7IP. Interacts with SND1. Part of TBP-based Pol II pre-initiation complex (PIC), in which Pol II core assembles with general transcription factors and other specific initiation factors including GTF2E1, GTF2E2, GTF2F1, GTF2F2, TCEA1, ERCC2, ERCC3, GTF2H2, GTF2H3, GTF2H4, GTF2H5, GTF2A1, GTF2A2, GTF2B and TBP; this large multi-subunit PIC complex mediates DNA unwinding and targets Pol II core to the transcription start site where the first phosphodiester bond forms.

It localises to the nucleus. Functionally, recruits TFIIH to the initiation complex and stimulates the RNA polymerase II C-terminal domain kinase and DNA-dependent ATPase activities of TFIIH. Both TFIIH and TFIIE are required for promoter clearance by RNA polymerase. The protein is General transcription factor IIE subunit 1 (GTF2E1) of Pongo abelii (Sumatran orangutan).